The primary structure comprises 121 residues: Ribosome-binding factor A (121 aa).

Belongs to the RbfA family. As to quaternary structure, monomer. Binds 30S ribosomal subunits, but not 50S ribosomal subunits or 70S ribosomes.

It is found in the cytoplasm. One of several proteins that assist in the late maturation steps of the functional core of the 30S ribosomal subunit. Associates with free 30S ribosomal subunits (but not with 30S subunits that are part of 70S ribosomes or polysomes). Required for efficient processing of 16S rRNA. May interact with the 5'-terminal helix region of 16S rRNA. The chain is Ribosome-binding factor A from Finegoldia magna (strain ATCC 29328 / DSM 20472 / WAL 2508) (Peptostreptococcus magnus).